The primary structure comprises 113 residues: Nucleoid-associated protein SYNW0027 (113 aa).

The protein belongs to the YbaB/EbfC family. In terms of assembly, homodimer.

It is found in the cytoplasm. It localises to the nucleoid. Functionally, binds to DNA and alters its conformation. May be involved in regulation of gene expression, nucleoid organization and DNA protection. The chain is Nucleoid-associated protein SYNW0027 from Parasynechococcus marenigrum (strain WH8102).